The following is a 40-amino-acid chain: Protein P4 (40 aa).

Residues 10–29 (KYFAYGVAISAAGAILAEYV) form a helical membrane-spanning segment.

Its subcellular location is the virion membrane. May interact with the viral DNA. The protein is Protein P4 (IV) of Pseudoalteromonas phage PM2 (Bacteriophage PM2).